The chain runs to 421 residues: Core protease I7 homolog (421 aa).

Catalysis depends on residues His242, Asp249, and Cys329.

It belongs to the peptidase C57 family.

Its subcellular location is the virion. In terms of biological role, late protein responsible for processing most or all of the viral core and membrane proteins known to undergo morphogenesis-associated proteolysis. These proteolytic events are involved in the transformation of immature virions (IV) into mature virions (MV). The polypeptide is Core protease I7 homolog (Fowlpox virus (strain NVSL) (FPV)).